Consider the following 388-residue polypeptide: Transcription factor SOX-7 (388 aa).

Disordered regions lie at residues 20 to 46 (DAEL…SRIR) and 140 to 197 (RDQN…VDTY). Basic and acidic residues-rich tracts occupy residues 36 to 45 (PGDKGSESRI) and 146 to 164 (PEKR…DRGE). The HMG box DNA-binding region spans 45–113 (IRRPMNAFMV…QHMQDYPNYK (69 aa)). A Sox C-terminal domain is found at 268–388 (VSMMSPVPGC…ATYYNSYSVS (121 aa)).

As to quaternary structure, interacts with CTNNB1/beta-catenin; this interaction may lead to the proteasomal degradation of active CTNNB1 and thus inhibition of Wnt/beta-catenin-stimulated transcription. In terms of tissue distribution, widely expressed in adult and fetal tissues. Present both in mesenchymal and epithelial cells in some adult tissues, including colon. Tends to be down-regulated in prostate adenocarcinomas and colorectal tumors due to promoter hypermethylation.

The protein resides in the nucleus. It localises to the cytoplasm. Binds to and activates the CDH5 promoter, hence plays a role in the transcriptional regulation of genes expressed in the hemogenic endothelium and blocks further differentiation into blood precursors. May be required for the survival of both hematopoietic and endothelial precursors during specification. Competes with GATA4 for binding and activation of the FGF3 promoter. Represses Wnt/beta-catenin-stimulated transcription, probably by targeting CTNNB1 to proteasomal degradation. Binds the DNA sequence 5'-AACAAT-3'. This Homo sapiens (Human) protein is Transcription factor SOX-7 (SOX7).